A 286-amino-acid chain; its full sequence is Energy-coupling factor transporter ATP-binding protein EcfA2 (286 aa).

Residues 3-246 form the ABC transporter domain; it reads IQFNQVSYIY…KTQLLKWHIE (244 aa). 40–47 contacts ATP; the sequence is GQTGSGKS.

The protein belongs to the ABC transporter superfamily. Energy-coupling factor EcfA family. In terms of assembly, forms a stable energy-coupling factor (ECF) transporter complex composed of 2 membrane-embedded substrate-binding proteins (S component), 2 ATP-binding proteins (A component) and 2 transmembrane proteins (T component).

The protein resides in the cell membrane. Its function is as follows. ATP-binding (A) component of a common energy-coupling factor (ECF) ABC-transporter complex. Unlike classic ABC transporters this ECF transporter provides the energy necessary to transport a number of different substrates. This chain is Energy-coupling factor transporter ATP-binding protein EcfA2, found in Staphylococcus epidermidis (strain ATCC 35984 / DSM 28319 / BCRC 17069 / CCUG 31568 / BM 3577 / RP62A).